Reading from the N-terminus, the 309-residue chain is Coproporphyrin III ferrochelatase (309 aa).

Fe-coproporphyrin III-binding positions include Y12, R29, 45-46 (RY), S53, and Y124. Fe(2+)-binding residues include H182 and E263.

It belongs to the ferrochelatase family.

It localises to the cytoplasm. It catalyses the reaction Fe-coproporphyrin III + 2 H(+) = coproporphyrin III + Fe(2+). It functions in the pathway porphyrin-containing compound metabolism; protoheme biosynthesis. In terms of biological role, involved in coproporphyrin-dependent heme b biosynthesis. Catalyzes the insertion of ferrous iron into coproporphyrin III to form Fe-coproporphyrin III. This is Coproporphyrin III ferrochelatase from Listeria innocua serovar 6a (strain ATCC BAA-680 / CLIP 11262).